A 552-amino-acid polypeptide reads, in one-letter code: Chaperonin GroEL 1 (552 aa).

Residues 30-33 (TLGP), K51, 87-91 (DGTTT), G415, 479-481 (NAA), and D495 contribute to the ATP site.

Belongs to the chaperonin (HSP60) family. In terms of assembly, forms a cylinder of 14 subunits composed of two heptameric rings stacked back-to-back. Interacts with the co-chaperonin GroES.

It is found in the cytoplasm. It catalyses the reaction ATP + H2O + a folded polypeptide = ADP + phosphate + an unfolded polypeptide.. In terms of biological role, together with its co-chaperonin GroES, plays an essential role in assisting protein folding. The GroEL-GroES system forms a nano-cage that allows encapsulation of the non-native substrate proteins and provides a physical environment optimized to promote and accelerate protein folding. The protein is Chaperonin GroEL 1 of Albidiferax ferrireducens (strain ATCC BAA-621 / DSM 15236 / T118) (Rhodoferax ferrireducens).